The chain runs to 252 residues: Thiazole synthase (252 aa).

Lysine 91 functions as the Schiff-base intermediate with DXP in the catalytic mechanism. 1-deoxy-D-xylulose 5-phosphate is bound by residues glycine 152, alanine 179–glycine 180, and asparagine 201–threonine 202.

Belongs to the ThiG family. In terms of assembly, homotetramer. Forms heterodimers with either ThiH or ThiS.

The protein localises to the cytoplasm. It carries out the reaction [ThiS sulfur-carrier protein]-C-terminal-Gly-aminoethanethioate + 2-iminoacetate + 1-deoxy-D-xylulose 5-phosphate = [ThiS sulfur-carrier protein]-C-terminal Gly-Gly + 2-[(2R,5Z)-2-carboxy-4-methylthiazol-5(2H)-ylidene]ethyl phosphate + 2 H2O + H(+). Its pathway is cofactor biosynthesis; thiamine diphosphate biosynthesis. Functionally, catalyzes the rearrangement of 1-deoxy-D-xylulose 5-phosphate (DXP) to produce the thiazole phosphate moiety of thiamine. Sulfur is provided by the thiocarboxylate moiety of the carrier protein ThiS. In vitro, sulfur can be provided by H(2)S. The chain is Thiazole synthase from Gluconobacter oxydans (strain 621H) (Gluconobacter suboxydans).